The sequence spans 353 residues: tRNA-specific 2-thiouridylase MnmA 1 (353 aa).

Residues 9 to 16 (AMSGGVDS) and methionine 35 each bind ATP. Cysteine 98 acts as the Nucleophile in catalysis. A disulfide bond links cysteine 98 and cysteine 194. Glycine 122 is an ATP binding site. Residues 144-146 (KDQ) are interaction with tRNA. Cysteine 194 functions as the Cysteine persulfide intermediate in the catalytic mechanism. Residues 300 to 301 (RY) form an interaction with tRNA region.

It belongs to the MnmA/TRMU family.

The protein localises to the cytoplasm. It carries out the reaction S-sulfanyl-L-cysteinyl-[protein] + uridine(34) in tRNA + AH2 + ATP = 2-thiouridine(34) in tRNA + L-cysteinyl-[protein] + A + AMP + diphosphate + H(+). Its function is as follows. Catalyzes the 2-thiolation of uridine at the wobble position (U34) of tRNA, leading to the formation of s(2)U34. In Clostridium botulinum (strain Okra / Type B1), this protein is tRNA-specific 2-thiouridylase MnmA 1.